Consider the following 130-residue polypeptide: Large ribosomal subunit protein bL17 (130 aa).

The protein belongs to the bacterial ribosomal protein bL17 family. In terms of assembly, part of the 50S ribosomal subunit. Contacts protein L32.

The polypeptide is Large ribosomal subunit protein bL17 (Photorhabdus laumondii subsp. laumondii (strain DSM 15139 / CIP 105565 / TT01) (Photorhabdus luminescens subsp. laumondii)).